A 373-amino-acid polypeptide reads, in one-letter code: 3-isopropylmalate dehydrogenase (373 aa).

Residue 82–93 coordinates NAD(+); the sequence is GPKWGTGAVRPE. Substrate-binding residues include arginine 100, arginine 110, arginine 139, and aspartate 231. 2 residues coordinate Mg(2+): aspartate 231 and aspartate 260. 295–306 is an NAD(+) binding site; the sequence is GSAPDLPENKVN.

It belongs to the isocitrate and isopropylmalate dehydrogenases family. In terms of assembly, homodimer. It depends on Mg(2+) as a cofactor. Mn(2+) is required as a cofactor.

The protein resides in the cytoplasm. It carries out the reaction (2R,3S)-3-isopropylmalate + NAD(+) = 4-methyl-2-oxopentanoate + CO2 + NADH. It participates in amino-acid biosynthesis; L-leucine biosynthesis; L-leucine from 3-methyl-2-oxobutanoate: step 3/4. Catalyzes the oxidation of 3-carboxy-2-hydroxy-4-methylpentanoate (3-isopropylmalate) to 3-carboxy-4-methyl-2-oxopentanoate. The product decarboxylates to 4-methyl-2 oxopentanoate. The chain is 3-isopropylmalate dehydrogenase (LEU2) from Scheffersomyces stipitis (strain ATCC 58785 / CBS 6054 / NBRC 10063 / NRRL Y-11545) (Yeast).